The primary structure comprises 435 residues: MQGMKKLFIETLGCAMNSRDSEHMIAELSEKEGYETTNDLSSADLIIINTCSVREKPVAKLFSELGVFNKRKKEGAKIGVCGCTASHLGEEIIKRAPYVSFVLGARNVSKISEVLHKERAVEIDINYDESEFAFNDFRTSPYKAYINISIGCDKSCTYCIVPKTRGEEISIPTELILREAQKAVKGGAKEIFLLGQNVNNYGRRFSGEHEKVSFSELLRRLSKIDALERIRFTSPHPFHMDDEFIEEFSSNPKICKSMHMPLQSGSSKVLKDMKRGYTKEWFLNRVQKLRAMSPDVSISTDIIVAFPGESDEDFEETLSIMREVKFDQIFSFKYSPRPETEAEHFTNIVDEDVASSRLTTLQNLAVNILDEKNKTHLGKIYRVYFEDLNQDYYASGRSDNNLLIKVKGSDELLGEFRDVKITDIGRTILSGEIVG.

In terms of domain architecture, MTTase N-terminal spans 5-120; sequence KKLFIETLGC…ISEVLHKERA (116 aa). [4Fe-4S] cluster-binding residues include Cys14, Cys51, Cys83, Cys152, Cys156, and Cys159. The Radical SAM core domain maps to 138-372; sequence RTSPYKAYIN…NLAVNILDEK (235 aa). Residues 374-435 enclose the TRAM domain; it reads KTHLGKIYRV…RTILSGEIVG (62 aa).

It belongs to the methylthiotransferase family. MiaB subfamily. As to quaternary structure, monomer. Requires [4Fe-4S] cluster as cofactor.

The protein resides in the cytoplasm. The enzyme catalyses N(6)-dimethylallyladenosine(37) in tRNA + (sulfur carrier)-SH + AH2 + 2 S-adenosyl-L-methionine = 2-methylsulfanyl-N(6)-dimethylallyladenosine(37) in tRNA + (sulfur carrier)-H + 5'-deoxyadenosine + L-methionine + A + S-adenosyl-L-homocysteine + 2 H(+). In terms of biological role, catalyzes the methylthiolation of N6-(dimethylallyl)adenosine (i(6)A), leading to the formation of 2-methylthio-N6-(dimethylallyl)adenosine (ms(2)i(6)A) at position 37 in tRNAs that read codons beginning with uridine. The sequence is that of tRNA-2-methylthio-N(6)-dimethylallyladenosine synthase from Sulfurimonas denitrificans (strain ATCC 33889 / DSM 1251) (Thiomicrospira denitrificans (strain ATCC 33889 / DSM 1251)).